Here is a 369-residue protein sequence, read N- to C-terminus: S-(hydroxymethyl)glutathione dehydrogenase (369 aa).

7 residues coordinate Zn(2+): Cys40, His62, Cys92, Cys95, Cys98, Cys106, and Cys169.

Belongs to the zinc-containing alcohol dehydrogenase family. Class-III subfamily. As to quaternary structure, homodimer. Zn(2+) serves as cofactor.

It is found in the cytoplasm. The catalysed reaction is S-(hydroxymethyl)glutathione + NADP(+) = S-formylglutathione + NADPH + H(+). It carries out the reaction S-(hydroxymethyl)glutathione + NAD(+) = S-formylglutathione + NADH + H(+). The enzyme catalyses a primary alcohol + NAD(+) = an aldehyde + NADH + H(+). It catalyses the reaction a secondary alcohol + NAD(+) = a ketone + NADH + H(+). The catalysed reaction is S-nitrosoglutathione + NADH + H(+) = S-(hydroxysulfenamide)glutathione + NAD(+). Its function is as follows. Has high formaldehyde dehydrogenase activity in the presence of glutathione and catalyzes the oxidation of normal alcohols in a reaction that is not GSH-dependent. In addition, hemithiolacetals other than those formed from GSH, including omega-thiol fatty acids, also are substrates. Also acts as a S-nitroso-glutathione reductase by catalyzing the NADH-dependent reduction of S-nitrosoglutathione. This Escherichia coli (strain ATCC 8739 / DSM 1576 / NBRC 3972 / NCIMB 8545 / WDCM 00012 / Crooks) protein is S-(hydroxymethyl)glutathione dehydrogenase (frmA).